Consider the following 233-residue polypeptide: MQITPDNIIFYQYQFVVINATLVYTWLTMALLVIGAAWVTKKLVVRPKLPPWQNFLEIVVDGIYQHIAEVTQQEPEPYLAFVGTLFLFILTANLLTVVPGYQAPTGSLSTTTALAIAVFIAVPIYGIRQRGILGYLKSYLQPTPIMLPFQIIGEFSRTLALAVRLFGNIMSGNLLAAILLALVPLFVPVAMNLLGLVFGVIQAYVFAILALVYIASAATVQEKKQSISMEENS.

A run of 5 helical transmembrane segments spans residues 15 to 35 (FVVI…LVIG), 78 to 98 (YLAF…LTVV), 107 to 127 (SLST…IYGI), 169 to 189 (IMSG…FVPV), and 194 to 214 (LGLV…LVYI).

This sequence belongs to the ATPase A chain family. F-type ATPases have 2 components, CF(1) - the catalytic core - and CF(0) - the membrane proton channel. CF(1) has five subunits: alpha(3), beta(3), gamma(1), delta(1), epsilon(1). CF(0) has four main subunits: a, b, b' and c.

It is found in the cellular thylakoid membrane. In terms of biological role, key component of the proton channel; it plays a direct role in the translocation of protons across the membrane. The polypeptide is ATP synthase subunit a 2 (Picosynechococcus sp. (strain ATCC 27264 / PCC 7002 / PR-6) (Agmenellum quadruplicatum)).